Here is a 109-residue protein sequence, read N- to C-terminus: MVKNSFISIISQEENKENRGSVEFQIVSFTNKIDRLTSHLQLHKKDYLSERGLLKILGKRHRLLAYLSKKTRVDYKEFKELIDQLDKTKTRVDYKEFKELIDQLEKKTR.

This sequence belongs to the universal ribosomal protein uS15 family. Part of the 30S ribosomal subunit.

Its subcellular location is the plastid. The protein resides in the chloroplast. This chain is Small ribosomal subunit protein uS15c (rps15-A), found in Trachelium caeruleum (Blue throatwort).